Consider the following 92-residue polypeptide: UPF0297 protein TTE1249 (92 aa).

Belongs to the UPF0297 family.

The polypeptide is UPF0297 protein TTE1249 (Caldanaerobacter subterraneus subsp. tengcongensis (strain DSM 15242 / JCM 11007 / NBRC 100824 / MB4) (Thermoanaerobacter tengcongensis)).